Consider the following 209-residue polypeptide: Large ribosomal subunit protein uL3 (209 aa).

The segment at 133 to 153 (THGNSLSHRAPGSIGQNQTPG) is disordered. An N5-methylglutamine modification is found at glutamine 150.

It belongs to the universal ribosomal protein uL3 family. In terms of assembly, part of the 50S ribosomal subunit. Forms a cluster with proteins L14 and L19. Post-translationally, methylated by PrmB.

Its function is as follows. One of the primary rRNA binding proteins, it binds directly near the 3'-end of the 23S rRNA, where it nucleates assembly of the 50S subunit. This is Large ribosomal subunit protein uL3 from Pectobacterium atrosepticum (strain SCRI 1043 / ATCC BAA-672) (Erwinia carotovora subsp. atroseptica).